Here is a 376-residue protein sequence, read N- to C-terminus: Nuclear egress protein 1 (376 aa).

Ser19 is modified (phosphoserine). The segment at 22–57 (RKRRQRELASKVASTVNGATSANNHGEPPSPADARP) is disordered. The span at 33 to 45 (VASTVNGATSANN) shows a compositional bias: polar residues. The segment at 106 to 211 (CLDISPYGNE…HVIFENSDVH (106 aa)) adopts a CCCH-type zinc-finger fold. Residues 316 to 376 (VVSTNGCGPS…PLFLNSIRAP (61 aa)) form a disordered region. The span at 317–332 (VSTNGCGPSSSSQSTP) shows a compositional bias: polar residues.

It belongs to the herpesviridae NEC1 protein family. Forms a heterohexameric complex with NEC2. Interacts with capsid vertex specific component 2/CVC2; this interaction directs the capsid to the host inner nuclear membrane to initiate budding. In terms of processing, phosphorylated at serine residues in the N-terminus. This phosphorylation regulates the localization within the inner nuclear membrane. Phosphorylation by viral kinase UL97 at Ser-19 plays an important role for correct viral nuclear egress complex (NEC) localization.

The protein localises to the host nucleus inner membrane. In terms of biological role, plays an essential role in virion nuclear egress, the first step of virion release from infected cell. Within the host nucleus, NEC1 interacts with the newly formed capsid through the vertexes and directs it to the inner nuclear membrane by associating with NEC2. Induces the budding of the capsid at the inner nuclear membrane as well as its envelopment into the perinuclear space. There, the NEC1/NEC2 complex promotes the fusion of the enveloped capsid with the outer nuclear membrane and the subsequent release of the viral capsid into the cytoplasm where it will reach the secondary budding sites in the host Golgi or trans-Golgi network. The polypeptide is Nuclear egress protein 1 (Homo sapiens (Human)).